The primary structure comprises 378 residues: Homoserine O-acetyltransferase (378 aa).

The region spanning 52–337 (NAILICHALT…YSQHGHDTFL (286 aa)) is the AB hydrolase-1 domain. Ser148 acts as the Nucleophile in catalysis. Arg217 lines the substrate pocket. Catalysis depends on residues Asp304 and His333. Asp334 contributes to the substrate binding site.

Belongs to the AB hydrolase superfamily. MetX family. In terms of assembly, homodimer.

The protein localises to the cytoplasm. The catalysed reaction is L-homoserine + acetyl-CoA = O-acetyl-L-homoserine + CoA. Its pathway is amino-acid biosynthesis; L-methionine biosynthesis via de novo pathway; O-acetyl-L-homoserine from L-homoserine: step 1/1. In terms of biological role, transfers an acetyl group from acetyl-CoA to L-homoserine, forming acetyl-L-homoserine. The polypeptide is Homoserine O-acetyltransferase (Chloroherpeton thalassium (strain ATCC 35110 / GB-78)).